The sequence spans 380 residues: Deoxyguanosinetriphosphate triphosphohydrolase-like protein (380 aa).

In terms of domain architecture, HD spans 79–196; it reads RLTHTLEVQQ…VDAADALAYT (118 aa).

Belongs to the dGTPase family. Type 2 subfamily.

This is Deoxyguanosinetriphosphate triphosphohydrolase-like protein from Deinococcus deserti (strain DSM 17065 / CIP 109153 / LMG 22923 / VCD115).